The primary structure comprises 901 residues: Protein translocase subunit SecA (901 aa).

ATP is bound by residues Gln85, 103–107 (GEGKT), and Asp510. Over residues 836–845 (EEAERARQEM) the composition is skewed to basic and acidic residues. The segment at 836–901 (EEAERARQEM…HCHGSRVARQ (66 aa)) is disordered. A compositionally biased stretch (polar residues) spans 849-866 (INQNNLPVDENSQTTQNS). 4 residues coordinate Zn(2+): Cys882, Cys884, Cys893, and His894. Residues 888–901 (KKYKHCHGSRVARQ) are compositionally biased toward basic residues.

This sequence belongs to the SecA family. In terms of assembly, monomer and homodimer. Part of the essential Sec protein translocation apparatus which comprises SecA, SecYEG and auxiliary proteins SecDF-YajC and YidC. The cofactor is Zn(2+).

Its subcellular location is the cell inner membrane. It is found in the cytoplasm. It carries out the reaction ATP + H2O + cellular proteinSide 1 = ADP + phosphate + cellular proteinSide 2.. Its function is as follows. Part of the Sec protein translocase complex. Interacts with the SecYEG preprotein conducting channel. Has a central role in coupling the hydrolysis of ATP to the transfer of proteins into and across the cell membrane, serving both as a receptor for the preprotein-SecB complex and as an ATP-driven molecular motor driving the stepwise translocation of polypeptide chains across the membrane. This is Protein translocase subunit SecA from Haemophilus influenzae (strain PittEE).